A 238-amino-acid polypeptide reads, in one-letter code: Survival of motor neuron-related-splicing factor 30 (238 aa).

The Tudor domain maps to 72-132; that stretch reads SWKVGDKCMA…KPVEEGRKAK (61 aa). The Nuclear localization signal motif lies at 142 to 160; the sequence is KKEMIAQQREYKKKKALKK. Residue Ser201 is modified to Phosphoserine. An N6-acetyllysine modification is found at Lys219.

Belongs to the SMN family. Associates with spliceosomes. Associates with U4/U5/U6 tri-snRNP and with U2 snRNP.

The protein localises to the nucleus speckle. It localises to the nucleus. The protein resides in the cajal body. Its function is as follows. Involved in spliceosome assembly. This Pongo abelii (Sumatran orangutan) protein is Survival of motor neuron-related-splicing factor 30 (SMNDC1).